Here is a 61-residue protein sequence, read N- to C-terminus: Small ribosomal subunit protein uS14 (61 aa).

The Zn(2+) site is built by cysteine 24, cysteine 27, cysteine 40, and cysteine 43.

Belongs to the universal ribosomal protein uS14 family. Zinc-binding uS14 subfamily. Part of the 30S ribosomal subunit. Contacts proteins S3 and S10. The cofactor is Zn(2+).

In terms of biological role, binds 16S rRNA, required for the assembly of 30S particles and may also be responsible for determining the conformation of the 16S rRNA at the A site. The sequence is that of Small ribosomal subunit protein uS14 from Clostridioides difficile (strain 630) (Peptoclostridium difficile).